Reading from the N-terminus, the 643-residue chain is Leukocyte immunoglobulin-like receptor subfamily B member 5 (643 aa).

Positions 1–23 (MTLTLSVLICLGLNVGPRTCVQA) are cleaved as a signal peptide. Residues 24-458 (GTLPKPTLWA…PQSGLGRHLG (435 aa)) are Extracellular-facing. 4 consecutive Ig-like C2-type domains span residues 27–116 (PKPT…LELV), 111–228 (DPLE…SLLI), 224–313 (PSLL…DPLD), and 337–418 (GENV…LVVS). An intrachain disulfide couples Cys49 to Cys98. Asn139 carries N-linked (GlcNAc...) asparagine glycosylation. 2 disulfide bridges follow: Cys144/Cys195 and Cys244/Cys295. Asn279 and Asn339 each carry an N-linked (GlcNAc...) asparagine glycan. Cys344 and Cys395 are oxidised to a cystine. Residues 417-433 (VSGPSGDPSLSPTGSTP) show a composition bias toward low complexity. The tract at residues 417–449 (VSGPSGDPSLSPTGSTPTPGPEDQPLTPTGLDP) is disordered. Residues 459–479 (VVTGVSVAFVLLLFLLLFLLL) form a helical membrane-spanning segment. The Cytoplasmic segment spans residues 480–643 (RHRHQSKHRT…PSIYAPLAIH (164 aa)). Residues 493 to 643 (FYRPAGAAGP…PSIYAPLAIH (151 aa)) are disordered. Position 514 is a phosphoserine (Ser514). Composition is skewed to basic and acidic residues over residues 531-549 (TQPK…RDED), 557-567 (EVKHSRPRREM), and 579-592 (LDTK…DRQM). The ITIM motif 1 signature appears at 605–610 (VTYAQL). Basic and acidic residues predominate over residues 615–631 (LRREATEPPPSQEREPP). The short motif at 635–640 (SIYAPL) is the ITIM motif 2 element.

Its subcellular location is the membrane. Functionally, may act as receptor for class I MHC antigens. The polypeptide is Leukocyte immunoglobulin-like receptor subfamily B member 5 (LILRB5) (Pan troglodytes (Chimpanzee)).